A 900-amino-acid polypeptide reads, in one-letter code: UPF0182 protein Ppro_3567 (900 aa).

7 consecutive transmembrane segments (helical) span residues 15-35 (FFPLLILVSVLLSLISYLLNL), 60-80 (GAGLLFGGLLFLFVQINLHVA), 112-132 (VSMLVSFVLALLAGNLGAMKW), 174-194 (FIILAAAALATAVYYVRGGIL), 210-230 (LAVLVGIFACAVAAGFYLDSF), 257-277 (VLTFLTPLAGAMLAIGIWKGV), and 282-302 (LLAPAIVVALYMLGIRVYPGV).

This sequence belongs to the UPF0182 family.

The protein resides in the cell membrane. This Pelobacter propionicus (strain DSM 2379 / NBRC 103807 / OttBd1) protein is UPF0182 protein Ppro_3567.